The sequence spans 243 residues: Small ribosomal subunit protein uS3 (243 aa).

A KH type-2 domain is found at 22–93 (LNEFLTRELA…SVELYAEKVA (72 aa)). The interval 195–243 (QQGKNGPKKPQPDHILVTEPKDEPAPLEPTSDIRSLAPAPLPQPVAAVA) is disordered.

It belongs to the universal ribosomal protein uS3 family.

The protein is Small ribosomal subunit protein uS3 (RpS3) of Manduca sexta (Tobacco hawkmoth).